Reading from the N-terminus, the 127-residue chain is Fumarate reductase subunit C (127 aa).

The next 3 membrane-spanning stretches (helical) occupy residues 30-50 (ATVL…GSLV), 67-87 (VVIA…HTFF), and 107-127 (IIVL…LIVV).

This sequence belongs to the FrdC family. Part of an enzyme complex containing four subunits: a flavoprotein (FrdA), an iron-sulfur protein (FrdB), and two hydrophobic anchor proteins (FrdC and FrdD).

The protein resides in the cell inner membrane. Anchors the catalytic components of the fumarate reductase complex to the cell membrane, binds quinones. This Vibrio vulnificus (strain CMCP6) protein is Fumarate reductase subunit C.